The primary structure comprises 214 residues: Chalcone isomerase-like protein 1 (214 aa).

It belongs to the chalcone isomerase family. In terms of tissue distribution, mostly expressed in glandular trichomes (lupulin glands), and, to a lower extent, in cones, cones bracts, leaves, stems and roots.

The protein resides in the cytoplasm. It carries out the reaction a chalcone = a flavanone.. The protein operates within secondary metabolite biosynthesis; flavonoid biosynthesis. In terms of biological role, involved in the biosynthesis of prenylated phenolics natural products which contribute to the bitter taste of beer and display broad biological activities. Involved in anthocyanin biosynthesis. Polyketide binding proteins (PBP) which reduces the catalytic activities of CHS_H1 and PT1L and prevents demethylxanthohumol (DMX) production, by binding to DMX and naringenin chalcone (NC) to stabilize the chalconoids ring-opened structure. The protein is Chalcone isomerase-like protein 1 of Humulus lupulus (European hop).